The chain runs to 490 residues: Glutamate--tRNA ligase (490 aa).

The short motif at 10-20 (PSPTGSLHIGG) is the 'HIGH' region element. Positions 251-255 (KLSKR) match the 'KMSKS' region motif. Position 254 (Lys-254) interacts with ATP.

Belongs to the class-I aminoacyl-tRNA synthetase family. Glutamate--tRNA ligase type 1 subfamily. Monomer.

The protein localises to the cytoplasm. It catalyses the reaction tRNA(Glu) + L-glutamate + ATP = L-glutamyl-tRNA(Glu) + AMP + diphosphate. Its function is as follows. Catalyzes the attachment of glutamate to tRNA(Glu) in a two-step reaction: glutamate is first activated by ATP to form Glu-AMP and then transferred to the acceptor end of tRNA(Glu). In Moorella thermoacetica (strain ATCC 39073 / JCM 9320), this protein is Glutamate--tRNA ligase.